The following is a 331-amino-acid chain: MAEAQIKKNIFTISSSPHVRCDESVSKIMWSVCLALTPAAVFGVFNFGIHALEVIITGIIAAVVTEYFVEKVRNKPITITDGSAFLTGLLLSMCLPPDIPPYMVAIGSFIAIAIAKHSMGGLGQNIFNPAHIGRAALMVSWPVAMTTWSKLSASGVDAVTTATPLGILKLQGYSKLLETFGGQGALYKAMFLGTRNGSIGETSTILLVLGGLYLIYKKYINWQIPVVMIGTVGILTWAFGGTTGIFTGDPVFHMMAGGLVIGAFFMATDMVTIPMTIKGQIIFALGAGALTSLIRLKGGYPEGVCYSILLMNAVTPLIDKFTQPVKFGTRR.

The next 3 helical transmembrane spans lie at 23-43 (ESVSKIMWSVCLALTPAAVFG), 44-64 (VFNFGIHALEVIITGIIAAVV), and 84-106 (AFLTGLLLSMCLPPDIPPYMVAI). Position 163 is an FMN phosphoryl threonine (Thr163). The next 4 helical transmembrane spans lie at 196-216 (NGSIGETSTILLVLGGLYLIY), 226-246 (VVMIGTVGILTWAFGGTTGIF), 251-271 (VFHMMAGGLVIGAFFMATDMV), and 273-293 (IPMTIKGQIIFALGAGALTSL).

This sequence belongs to the NqrB/RnfD family. In terms of assembly, the complex is composed of six subunits: RnfA, RnfB, RnfC, RnfD, RnfE and RnfG. FMN serves as cofactor.

Its subcellular location is the cell membrane. Part of a membrane-bound complex that couples electron transfer with translocation of ions across the membrane. Couples electron transfer from reduced ferredoxin to NAD(+) with translocation of H(+) out of the cell. Essential for energy conservation during autotrophic growth. Contributes to ATP synthesis during heterotrophic growth. This Clostridium ljungdahlii (strain ATCC 55383 / DSM 13528 / PETC) protein is Proton-translocating ferredoxin:NAD(+) oxidoreductase complex subunit D.